The chain runs to 461 residues: Fumarate hydratase class II (461 aa).

Substrate contacts are provided by residues 97–99 (SGT), 127–130 (HPND), 137–139 (SSN), and T185. H186 acts as the Proton donor/acceptor in catalysis. S316 is an active-site residue. Residues S317 and 322-324 (KVN) contribute to the substrate site.

The protein belongs to the class-II fumarase/aspartase family. Fumarase subfamily. As to quaternary structure, homotetramer.

It localises to the cytoplasm. The catalysed reaction is (S)-malate = fumarate + H2O. The protein operates within carbohydrate metabolism; tricarboxylic acid cycle; (S)-malate from fumarate: step 1/1. Functionally, involved in the TCA cycle. Catalyzes the stereospecific interconversion of fumarate to L-malate. The protein is Fumarate hydratase class II of Oceanobacillus iheyensis (strain DSM 14371 / CIP 107618 / JCM 11309 / KCTC 3954 / HTE831).